We begin with the raw amino-acid sequence, 544 residues long: Membrane protein insertase YidC (544 aa).

A helical membrane pass occupies residues 4–24; the sequence is KALLALVLSAAVLLIYQIFIY. The tract at residues 44 to 78 is disordered; that stretch reads NPAAPVSPQTPADEPSSGSAANPETAAALPVDGTE. The next 3 membrane-spanning stretches (helical) occupy residues 363–383, 434–454, and 508–528; these read NYGI…WPLG, LPMI…LYAI, and PVIF…YWLF.

It belongs to the OXA1/ALB3/YidC family. Type 1 subfamily. Interacts with the Sec translocase complex via SecD. Specifically interacts with transmembrane segments of nascent integral membrane proteins during membrane integration.

The protein resides in the cell inner membrane. Functionally, required for the insertion and/or proper folding and/or complex formation of integral membrane proteins into the membrane. Involved in integration of membrane proteins that insert both dependently and independently of the Sec translocase complex, as well as at least some lipoproteins. Aids folding of multispanning membrane proteins. This Syntrophus aciditrophicus (strain SB) protein is Membrane protein insertase YidC.